The chain runs to 310 residues: Homoserine kinase (310 aa).

85 to 95 (PKGLGLGSSGA) contributes to the ATP binding site.

This sequence belongs to the GHMP kinase family. Homoserine kinase subfamily.

Its subcellular location is the cytoplasm. It carries out the reaction L-homoserine + ATP = O-phospho-L-homoserine + ADP + H(+). The protein operates within amino-acid biosynthesis; L-threonine biosynthesis; L-threonine from L-aspartate: step 4/5. Its function is as follows. Catalyzes the ATP-dependent phosphorylation of L-homoserine to L-homoserine phosphate. This chain is Homoserine kinase, found in Thermoplasma acidophilum (strain ATCC 25905 / DSM 1728 / JCM 9062 / NBRC 15155 / AMRC-C165).